The chain runs to 263 residues: Transmembrane protein 176B (263 aa).

A run of 4 helical transmembrane segments spans residues 61-81 (LGVTQILLGLVSCVLGVCLYF), 89-109 (ASGCAFWSGSVAILAGVGIVI), 125-145 (LLLACSATAAAATVMGVKSLI), and 197-217 (LFLAFCILFTVICILKIVVSV). The tract at residues 242–263 (KKLLGGDSAPASPTKEKIPVTP) is disordered. Serine 249 and serine 253 each carry phosphoserine.

Belongs to the TMEM176 family. As to expression, expressed in spleen by a variety of myeloid cells including macrophages and dendritic cells (at protein level). Ubiquitously expressed with higher expression in lymphoid tissues.

It is found in the nucleus membrane. Functionally, required for the development of cerebellar granule cells. May play a role in the process of maturation of dendritic cells. This chain is Transmembrane protein 176B (Tmem176b), found in Rattus norvegicus (Rat).